The following is a 231-amino-acid chain: 2-C-methyl-D-erythritol 2,4-cyclodiphosphate synthase, chloroplastic (231 aa).

A chloroplast-targeting transit peptide spans 1-52; that stretch reads MATSSTQLLLSSSSLFHSQITKKPFLLPATKIGVWRPKKSLSLSCRPSASVS. Residues Asp82 and His84 each contribute to the a divalent metal cation site. Substrate contacts are provided by residues 82–84, 108–109, 112–120, 130–132, 135–139, Asp139, 174–180, and 205–209; these read DLH, HS, DVLLHCVVD, DIG, FPDSD, LQRPKIS, and AKTHE. An a divalent metal cation-binding site is contributed by His116.

It belongs to the IspF family. Homotrimer. The cofactor is a divalent metal cation.

It localises to the plastid. The protein resides in the chloroplast stroma. It catalyses the reaction 4-CDP-2-C-methyl-D-erythritol 2-phosphate = 2-C-methyl-D-erythritol 2,4-cyclic diphosphate + CMP. Its pathway is isoprenoid biosynthesis; isopentenyl diphosphate biosynthesis via DXP pathway; isopentenyl diphosphate from 1-deoxy-D-xylulose 5-phosphate: step 4/6. Its function is as follows. Enzyme of the plastid non-mevalonate pathway for isoprenoid biosynthesis that converts 4-diphosphocytidyl-2C-methyl-D-erythritol 2-phosphate into 2C-methyl-D-erythritol 2,4-cyclodiphosphate and CMP. Is essential for chloroplast development. This chain is 2-C-methyl-D-erythritol 2,4-cyclodiphosphate synthase, chloroplastic, found in Arabidopsis thaliana (Mouse-ear cress).